The following is a 772-amino-acid chain: Transcription factor sdnS (772 aa).

Residues 23-53 (CWECRRRKIRCQFGAGNDTVCLPCQARGSTC) constitute a DNA-binding region (zn(2)-C6 fungal-type). Disordered stretches follow at residues 94-121 (EAGG…SAQN) and 156-180 (ASML…NSKT). The span at 100–121 (ANRSTTQSNRGSRSPSPDSAQN) shows a compositional bias: polar residues.

The protein resides in the nucleus. It functions in the pathway antibiotic biosynthesis. Functionally, transcription factor; part of the gene cluster that mediates the biosynthesis of sordarin and hypoxysordarin, glycoside antibiotics with a unique tetracyclic diterpene aglycone structure. First, the geranylgeranyl diphosphate synthase sdnC constructs GGDP from farnesyl diphosphate and isopentenyl diphosphate. The diterpene cyclase sdnA then catalyzes the cyclization of GGDP to afford cycloaraneosene. Cycloaraneosene is then hydroxylated four times by the putative cytochrome P450 monooxygenases sdnB, sdnE, sdnF and sdnH to give a hydroxylated cycloaraneosene derivative such as cycloaraneosene-8,9,13,19-tetraol. Although the order of the hydroxylations is unclear, at least C8, C9 and C13 of the cycloaraneosene skeleton are hydroxylated before the sordaricin formation. Dehydration of the 13-hydroxy group of the hydroxylated cycloaraneosene derivative might be catalyzed by an unassigned hypothetical protein such as sdnG and sdnP to construct the cyclopentadiene moiety. The FAD-dependent oxidoreductase sdnN is proposed to catalyze the oxidation at C9 of the hydroxylated cycloaraneosene derivative and also catalyze the Baeyer-Villiger oxidation to give the lactone intermediate. The presumed lactone intermediate would be hydrolyzed to give an acrolein moiety and a carboxylate moiety. Then, [4+2]cycloaddition would occur between the acrolein moiety and the cyclopentadiene moiety to give sordaricin. SdnN might also be involved in the [4+2]cycloaddition after the hypothesized oxidation to accommodate the oxidized product and prompt the [4+2]cycloaddition. GDP-6-deoxy-D-altrose may be biosynthesized from GDP-D-mannose by the putative GDP-mannose-4,6-dehydratase sdnI and the short-chain dehydrogenase sdnK. The glycosyltransferase sdnJ catalyzes the attachment of 6-deoxy-D-altrose onto the 19-hydroxy group of sordaricin to give 4'-O-demethylsordarin. The methyltransferase sdnD would complete the biosynthesis of sordarin. Sordarin can be further modified into hypoxysordarin. The unique acyl chain at the 3'-hydroxy group of hypoxysordarin would be constructed by an iterative type I PKS sdnO and the trans-acting polyketide methyltransferase sdnL. SdnL would be responsible for the introduction of an alpha-methyl group of the polyketide chain. Alternatively, the beta-lactamase-like protein sdnR might be responsible for the cleavage and transfer of the polyketide chain from the PKS sdnO to sordarin. Two putative cytochrome P450 monooxygenases, sdnQ and sdnT, might catalyze the epoxidations of the polyketide chain to complete the biosynthesis of hypoxysordarin. Transcriptional regulators sdnM and sdnS are presumably encoded for the transcriptional regulation of the expression of the sdn gene cluster. The chain is Transcription factor sdnS from Sordaria araneosa (Pleurage araneosa).